The following is a 211-amino-acid chain: Protein-L-isoaspartate O-methyltransferase (211 aa).

S60 is an active-site residue.

Belongs to the methyltransferase superfamily. L-isoaspartyl/D-aspartyl protein methyltransferase family.

It localises to the cytoplasm. It carries out the reaction [protein]-L-isoaspartate + S-adenosyl-L-methionine = [protein]-L-isoaspartate alpha-methyl ester + S-adenosyl-L-homocysteine. Catalyzes the methyl esterification of L-isoaspartyl residues in peptides and proteins that result from spontaneous decomposition of normal L-aspartyl and L-asparaginyl residues. It plays a role in the repair and/or degradation of damaged proteins. This chain is Protein-L-isoaspartate O-methyltransferase, found in Alteromonas mediterranea (strain DSM 17117 / CIP 110805 / LMG 28347 / Deep ecotype).